Consider the following 660-residue polypeptide: MSLRAKTCPQRREMASATSGPGRCVSKGGLGRRPPLARVRVAVRLRPFMDGETEAKELPCVRAIDSCSLEVANWKKYQETLKYQFDAFYGEKSTQQEVYVGSVQPILRHLLEGQNASVLAYGPTGAGKTHTMLGSPEQPGVIPRALMDLLQLAREESAEGRPWDVSVAMSYLEIYQEKVLDLLDPASGDLVIREDCRGNILIPGLTQKPITSFSDFEQHFLPASRNRAVGATRLNQRSSRSHAVLLVKVDQRERLTPFRQREGKLYLIDLAGSEDNRRTGNQGIRLKESGAINTSLFVLGKVVDALNQGLPRIPYRDSKLTRLLQDSLGGSAHSILIANIAPERRFYQDTISALNFTARSKEVINRPFTNESLQPHALAPVKLSQKELLGPSEAKKAKGPEEESTGSPESTAAPASASQKLSLLQKLSNMDPAMLENLLSMERLLGSQGSQGTPLLNTPKRERMVLMKTVEEKNLEIERLKMKQKELEAKVLAQEAPDPREKENTPTILQPPASYSGTVAKPLKKAVVMPLQRIQKQRESSNQIQLLKKGPKRKLEPSPESEAVEKDEDYWEVQISPELLAHGRKKLLDLLNEGSARELRSLQRIGQKKAQLIVGWRELHGPFSEVEDLEQVEGISGKQVESFLKANLLSLAASQHSGPS.

The interval Met-1–Gly-31 is disordered. Positions Arg-38–Val-363 constitute a Kinesin motor domain. Gly-122–Thr-129 provides a ligand contact to ATP. The interval Pro-391 to Ser-418 is disordered. Low complexity predominate over residues Thr-405–Ser-418. Phosphoserine is present on residues Ser-407, Ser-422, and Ser-447. Lys-460 is covalently cross-linked (Glycyl lysine isopeptide (Lys-Gly) (interchain with G-Cter in SUMO2)). Residues Lys-460 to Thr-505 adopt a coiled-coil conformation. 2 disordered regions span residues Ala-493 to Ser-516 and Ile-534 to Asp-567. Residues Thr-505–Ser-516 are compositionally biased toward polar residues. Phosphoserine is present on residues Ser-540 and Ser-576.

This sequence belongs to the TRAFAC class myosin-kinesin ATPase superfamily. Kinesin family. Interacts with FAM83D and SIAH1. In terms of processing, ubiquitinated; mediated by SIAH1 and leading to its subsequent proteasomal degradation.

The protein resides in the nucleus. Its subcellular location is the cytoplasm. It localises to the cytoskeleton. Functionally, kinesin family member that is involved in spindle formation and the movements of chromosomes during mitosis and meiosis. Binds to microtubules and to DNA. Plays a role in congression of laterally attached chromosomes in NDC80-depleted cells. The chain is Kinesin-like protein KIF22 (Kif22) from Mus musculus (Mouse).